We begin with the raw amino-acid sequence, 357 residues long: Glutamine synthetase root isozyme 1 (357 aa).

A GS beta-grasp domain is found at 19–99; the sequence is IIAEYIWIGG…VMCDCYTPQG (81 aa). The GS catalytic domain occupies 106 to 357; the sequence is KRYSAAKVFS…AETTILWNGN (252 aa).

This sequence belongs to the glutamine synthetase family. Homooctamer. As to expression, found mainly in the cortical tissues of seedling roots, and in the root tip.

It localises to the cytoplasm. It carries out the reaction L-glutamate + NH4(+) + ATP = L-glutamine + ADP + phosphate + H(+). Its function is as follows. Plays a role in the flow of nitrogen into nitrogenous organic compounds. This is Glutamine synthetase root isozyme 1 (GLN6) from Zea mays (Maize).